Consider the following 726-residue polypeptide: Amino-acid acetyltransferase, mitochondrial (726 aa).

The segment covering 1 to 18 (MSSRTLVGLRSTTSTHLQ) has biased composition (polar residues). The N-terminal 44 residues, 1–44 (MSSRTLVGLRSTTSTHLQRSGVAAAAAVSSSSTSSSGSAPRRCL), are a transit peptide targeting the mitochondrion. The disordered stretch occupies residues 1-64 (MSSRTLVGLR…SAEFSSSSKS (64 aa)). Low complexity predominate over residues 20 to 39 (SGVAAAAAVSSSSTSSSGSA). A compositionally biased stretch (polar residues) spans 45-58 (SSASGRQVQQSAEF). Residues 547-716 (DRPRLGLDDP…YEAVCRSIQP (170 aa)) enclose the N-acetyltransferase domain.

This sequence belongs to the acetyltransferase family.

The protein resides in the mitochondrion. The enzyme catalyses L-glutamate + acetyl-CoA = N-acetyl-L-glutamate + CoA + H(+). Its pathway is amino-acid biosynthesis; L-arginine biosynthesis; N(2)-acetyl-L-ornithine from L-glutamate: step 1/4. Its function is as follows. N-acetylglutamate synthase involved in arginine biosynthesis. This Aspergillus niger (strain ATCC MYA-4892 / CBS 513.88 / FGSC A1513) protein is Amino-acid acetyltransferase, mitochondrial (arg2).